We begin with the raw amino-acid sequence, 618 residues long: MSQLANPELMKVVILLASSVTIVPLFKRLGLGSVLGYLVAGCLIGPSVFGIVQEPTAVVHLAELGVVMFLFIIGLEMYPERLWAMRKAIFGRGLLQVGLCGCLLTFSGIYLLGLTKEVSFIAGMGFTLSSTAIVMQSLEERGLTSTSKGQRVISTLIFEDIAIVPLLASVAFLAPHSKEATPHTDWVSIGIALSAVVGLIVTGKWLMNPLFRLISKARIREMMTAGALLVVLGAALAMEIGGLSMAMGAFVAGVMMSESAFRHQLEADIEPFRGLLLGLFFMGVGMSLDLHLVFNHWILLLGIVFLYILGKASAVYIIARITRLDHREAIGRMSLMAHGGEFAFVLFSAAATAEVISNEEQATFTAAVIISMLFSPIIAQIARKLIQRTEPKHLDQLDENDLDTIVDLEDNVLVIGFGRFSQIVCQTLLIRGISVSVIDRNIENIRAAAKFGFKVYYGDGIRLDVLRAAGIEKAKCVVLGINDTQRIEHIVSQMKEAYPNLPILTRTYDRKTTVSLIKQDVDFIVRETFESAITLSRATLMKLGIDKIEAEEIIKEVRTLDQERLNEEVLHGFSNEIVKKYWTPRPFIKPHLDTKALNKETEEILSEKIEEEISNDHS.

Helical transmembrane passes span 6 to 26 (NPELMKVVILLASSVTIVPLF), 32 to 52 (GSVLGYLVAGCLIGPSVFGIV), 55 to 75 (PTAVVHLAELGVVMFLFIIGL), 94 to 114 (LLQVGLCGCLLTFSGIYLLGL), 118 to 138 (VSFIAGMGFTLSSTAIVMQSL), 152 to 172 (VISTLIFEDIAIVPLLASVAF), 186 to 206 (WVSIGIALSAVVGLIVTGKWL), 227 to 247 (ALLVVLGAALAMEIGGLSMAM), 274 to 294 (GLLLGLFFMGVGMSLDLHLVF), 298 to 318 (ILLLGIVFLYILGKASAVYII), 336 to 356 (MAHGGEFAFVLFSAAATAEVI), and 362 to 382 (ATFTAAVIISMLFSPIIAQIA). The RCK N-terminal domain occupies 409-525 (EDNVLVIGFG…LIKQDVDFIV (117 aa)).

Belongs to the monovalent cation:proton antiporter 2 (CPA2) transporter (TC 2.A.37) family.

It is found in the cell inner membrane. Functionally, transport system that facilitate potassium-efflux, possibly by potassium-proton antiport. This is Glutathione-regulated potassium-efflux system protein (kefBC) from Haemophilus influenzae (strain ATCC 51907 / DSM 11121 / KW20 / Rd).